The sequence spans 350 residues: Dihydroorotase (350 aa).

The Zn(2+) site is built by His-13 and His-15. Substrate is bound by residues 15 to 17 and Asn-41; that span reads HLR. Residues Lys-99, His-136, and His-174 each coordinate Zn(2+). Lys-99 bears the N6-carboxylysine mark. His-136 lines the substrate pocket. Position 219 (Leu-219) interacts with substrate. Asp-247 is a binding site for Zn(2+). Residue Asp-247 is part of the active site. His-251 and Ala-263 together coordinate substrate.

This sequence belongs to the metallo-dependent hydrolases superfamily. DHOase family. Class II DHOase subfamily. Homodimer. The cofactor is Zn(2+).

It catalyses the reaction (S)-dihydroorotate + H2O = N-carbamoyl-L-aspartate + H(+). It participates in pyrimidine metabolism; UMP biosynthesis via de novo pathway; (S)-dihydroorotate from bicarbonate: step 3/3. In terms of biological role, catalyzes the reversible cyclization of carbamoyl aspartate to dihydroorotate. This Allorhizobium ampelinum (strain ATCC BAA-846 / DSM 112012 / S4) (Agrobacterium vitis (strain S4)) protein is Dihydroorotase.